Reading from the N-terminus, the 507-residue chain is Inositol-3-phosphate synthase (507 aa).

NAD(+)-binding residues include G70, G71, N72, N73, D143, I180, Q190, R193, T230, A231, N232, T233, G281, S282, D306, S309, N340, N341, D342, K355, A391, D419, and S420.

It belongs to the myo-inositol 1-phosphate synthase family. The cofactor is NAD(+).

It localises to the cytoplasm. The protein resides in the cytosol. It is found in the nucleus. It carries out the reaction D-glucose 6-phosphate = 1D-myo-inositol 3-phosphate. It functions in the pathway polyol metabolism; myo-inositol biosynthesis; myo-inositol from D-glucose 6-phosphate: step 1/2. In terms of biological role, key enzyme in myo-inositol biosynthesis pathway that catalyzes the conversion of glucose 6-phosphate to 1-myo-inositol 1-phosphate in a NAD-dependent manner. In Citrus paradisi (Grapefruit), this protein is Inositol-3-phosphate synthase.